Here is an 828-residue protein sequence, read N- to C-terminus: MKLSRRSFMKANAVAAAAAAAGLSVPGVARAVVGQQEAIKWDKAPCRFCGTGCGVLVGTQQGRVVACQGDPDAPVNRGLNCIKGYFLPKIMYGKDRLTQPMLRMKDGSYHKDGEFTPVSWEQAFDVMEEKFKTSLKEKGPEAIGMFGSGQWTIWEGYAAAKLFKAGFRSNNIDPNARHCMASAVVGFMRTFGMDEPMGCYDDIEQADAFVLWGSNMAEMHPILWSRITNRRLSDPNVKVAVLSTFQHRSFELADNGIVFTPQSDLVILNYIANYIIQNNAVNQDFFTKHVNLRKGATDIGYGLRPTHPLEKAAKNPGSDASEPMSFDEYKAFVAEYTLDKTAEMTGVPKDQLEQLAQLYADPNKRVISYWTMGFNQHTRGVWANNLVYNLHLLTGKISQPGCGPFSLTGQPSACGTAREVGTFSHRLPADMVVTNEKHRDICEKHWQIPAGTIPAKVGLHAVAQDRALKDGKLNVYWVMCNNNMQAGPNINEDRMPGWRDPRNFIIVSDPYPTVSALSADLILPTAMWVEKEGAYGNAERRTQFWRQQIKAPGEAKSDLWQLVQFSRRFKTEEVWPEALLSQKPELRGKTLYDVLFATPAVSKFPLSELKEDQLNDESRELGFYLQKGLFEEYAWFGRGHGHDLAPFDDYHNARGLRWPVVEGKETQWRYSEGNDPYVKAGEGYKFYGKPDGKAVIFALPFEPAAESPDNEYDLWLSTGRVLEHWHTGSMTRRVPELHRAFPEAVVFIHPLDAKARDLRRGDKVKVSSRRGEVISIVETRGRNRPPQGLVYMPFFDAAQLVNNLTLDATDPLSKETDFKKCAVKLAKV.

A signal peptide (tat-type signal) is located at residues 1-31 (MKLSRRSFMKANAVAAAAAAAGLSVPGVARA). The 4Fe-4S Mo/W bis-MGD-type domain maps to 39–95 (IKWDKAPCRFCGTGCGVLVGTQQGRVVACQGDPDAPVNRGLNCIKGYFLPKIMYGKD). Cysteine 46, cysteine 49, cysteine 53, and cysteine 81 together coordinate [4Fe-4S] cluster. Residues lysine 83, glutamine 150, asparagine 175, cysteine 179, 212 to 219 (WGSNMAEM), 243 to 247 (STFQH), 262 to 264 (QSD), methionine 372, glutamine 376, asparagine 482, 508 to 509 (SD), lysine 531, aspartate 558, and 718 to 727 (TGRVLEHWHT) contribute to the Mo-bis(molybdopterin guanine dinucleotide) site. Position 794 (phenylalanine 794) interacts with substrate. 2 residues coordinate Mo-bis(molybdopterin guanine dinucleotide): asparagine 802 and lysine 819.

The protein belongs to the prokaryotic molybdopterin-containing oxidoreductase family. NasA/NapA/NarB subfamily. Component of the periplasmic nitrate reductase NapAB complex composed of NapA and NapB. The cofactor is [4Fe-4S] cluster. Mo-bis(molybdopterin guanine dinucleotide) serves as cofactor. Post-translationally, predicted to be exported by the Tat system. The position of the signal peptide cleavage has not been experimentally proven.

The protein resides in the periplasm. It carries out the reaction 2 Fe(II)-[cytochrome] + nitrate + 2 H(+) = 2 Fe(III)-[cytochrome] + nitrite + H2O. Functionally, catalytic subunit of the periplasmic nitrate reductase complex NapAB. Receives electrons from NapB and catalyzes the reduction of nitrate to nitrite. In Salmonella dublin (strain CT_02021853), this protein is Periplasmic nitrate reductase.